A 61-amino-acid polypeptide reads, in one-letter code: Small ribosomal subunit protein uS14 (61 aa).

Positions 24, 27, 40, and 43 each coordinate Zn(2+).

The protein belongs to the universal ribosomal protein uS14 family. Zinc-binding uS14 subfamily. As to quaternary structure, part of the 30S ribosomal subunit. Contacts proteins S3 and S10. Requires Zn(2+) as cofactor.

In terms of biological role, binds 16S rRNA, required for the assembly of 30S particles and may also be responsible for determining the conformation of the 16S rRNA at the A site. This Finegoldia magna (strain ATCC 29328 / DSM 20472 / WAL 2508) (Peptostreptococcus magnus) protein is Small ribosomal subunit protein uS14.